The sequence spans 124 residues: uncharacterized protein (124 aa).

This is an uncharacterized protein from Haemophilus influenzae (strain ATCC 51907 / DSM 11121 / KW20 / Rd).